The sequence spans 209 residues: Peptide methionine sulfoxide reductase MsrA (209 aa).

The active site involves cysteine 14. Positions 183–209 (FSALTTGGNQPGARGGLTNNTCQHPRH) are disordered. A compositionally biased stretch (polar residues) spans 199-209 (LTNNTCQHPRH).

The protein belongs to the MsrA Met sulfoxide reductase family.

The enzyme catalyses L-methionyl-[protein] + [thioredoxin]-disulfide + H2O = L-methionyl-(S)-S-oxide-[protein] + [thioredoxin]-dithiol. It catalyses the reaction [thioredoxin]-disulfide + L-methionine + H2O = L-methionine (S)-S-oxide + [thioredoxin]-dithiol. Its function is as follows. Has an important function as a repair enzyme for proteins that have been inactivated by oxidation. Catalyzes the reversible oxidation-reduction of methionine sulfoxide in proteins to methionine. This Pseudomonas fluorescens protein is Peptide methionine sulfoxide reductase MsrA.